We begin with the raw amino-acid sequence, 90 residues long: Small ribosomal subunit protein bS16 (90 aa).

It belongs to the bacterial ribosomal protein bS16 family.

The protein is Small ribosomal subunit protein bS16 of Oceanobacillus iheyensis (strain DSM 14371 / CIP 107618 / JCM 11309 / KCTC 3954 / HTE831).